Here is a 110-residue protein sequence, read N- to C-terminus: Iron-sulfur cluster assembly protein CyaY (110 aa).

Belongs to the frataxin family.

Functionally, involved in iron-sulfur (Fe-S) cluster assembly. May act as a regulator of Fe-S biogenesis. This is Iron-sulfur cluster assembly protein CyaY from Pseudomonas fluorescens (strain ATCC BAA-477 / NRRL B-23932 / Pf-5).